We begin with the raw amino-acid sequence, 62 residues long: Bowman-Birk type proteinase inhibitor (62 aa).

Disulfide bonds link Cys-8/Cys-61, Cys-9/Cys-24, Cys-12/Cys-57, Cys-14/Cys-22, Cys-31/Cys-38, Cys-35/Cys-50, and Cys-40/Cys-48.

As to quaternary structure, forms a monomer at protein concentrations of below 1 mM. At concentrations of above 2 mM, self-associates.

Inhibits trypsin but not chymotrypsin. Inhibits the trypsin-like proteinase activity present in larvae of the crop pests Adoxophyes orana, Hyphantria cunea, Lobesia botrana and Ostrinia nubilalis. In Medicago scutellata (Snail medic), this protein is Bowman-Birk type proteinase inhibitor.